Consider the following 392-residue polypeptide: Chaperone protein DnaJ (392 aa).

In terms of domain architecture, J spans 2-67 (DYYSILGISK…QKRDSYDRFG (66 aa)). The segment at 148–226 (GVEKELVVSG…CRGQGRVKDK (79 aa)) adopts a CR-type zinc-finger fold. Residues Cys-161, Cys-164, Cys-178, Cys-181, Cys-200, Cys-203, Cys-214, and Cys-217 each contribute to the Zn(2+) site. CXXCXGXG motif repeat units lie at residues 161-168 (CETCSGQG), 178-185 (CERCKGSG), 200-207 (CPECGGEG), and 214-221 (CSSCRGQG).

Belongs to the DnaJ family. In terms of assembly, homodimer. The cofactor is Zn(2+).

The protein localises to the cytoplasm. In terms of biological role, participates actively in the response to hyperosmotic and heat shock by preventing the aggregation of stress-denatured proteins and by disaggregating proteins, also in an autonomous, DnaK-independent fashion. Unfolded proteins bind initially to DnaJ; upon interaction with the DnaJ-bound protein, DnaK hydrolyzes its bound ATP, resulting in the formation of a stable complex. GrpE releases ADP from DnaK; ATP binding to DnaK triggers the release of the substrate protein, thus completing the reaction cycle. Several rounds of ATP-dependent interactions between DnaJ, DnaK and GrpE are required for fully efficient folding. Also involved, together with DnaK and GrpE, in the DNA replication of plasmids through activation of initiation proteins. The sequence is that of Chaperone protein DnaJ from Chlamydia pneumoniae (Chlamydophila pneumoniae).